Here is a 348-residue protein sequence, read N- to C-terminus: tRNA pseudouridine synthase D (348 aa).

Residue Phe-26 participates in substrate binding. Asp-79 (nucleophile) is an active-site residue. Asn-128 contributes to the substrate binding site. Residues 154–302 (GVPNYFGSQR…VDPARRALLL (149 aa)) form the TRUD domain. Phe-328 is a binding site for substrate.

Belongs to the pseudouridine synthase TruD family.

The catalysed reaction is uridine(13) in tRNA = pseudouridine(13) in tRNA. Its function is as follows. Responsible for synthesis of pseudouridine from uracil-13 in transfer RNAs. The sequence is that of tRNA pseudouridine synthase D from Serratia proteamaculans (strain 568).